The chain runs to 278 residues: Protoheme IX farnesyltransferase (278 aa).

The next 9 helical transmembrane spans lie at 12–32, 36–56, 72–92, 105–124, 130–150, 157–177, 204–224, 228–248, and 257–277; these read VIWL…GTVD, LAAL…FNHY, PLPA…ALSA, LPGV…YTVW, WLNI…GYAL, LPAV…IWAL, AIIS…YLVF, LPGL…SALA, and MWRM…ALVF.

The protein belongs to the UbiA prenyltransferase family. Protoheme IX farnesyltransferase subfamily.

It localises to the cell membrane. It carries out the reaction heme b + (2E,6E)-farnesyl diphosphate + H2O = Fe(II)-heme o + diphosphate. It participates in porphyrin-containing compound metabolism; heme O biosynthesis; heme O from protoheme: step 1/1. Functionally, converts heme B (protoheme IX) to heme O by substitution of the vinyl group on carbon 2 of heme B porphyrin ring with a hydroxyethyl farnesyl side group. In Pyrobaculum neutrophilum (strain DSM 2338 / JCM 9278 / NBRC 100436 / V24Sta) (Thermoproteus neutrophilus), this protein is Protoheme IX farnesyltransferase.